Here is a 1025-residue protein sequence, read N- to C-terminus: Multidrug resistance protein MdtC (1025 aa).

Helical transmembrane passes span 3 to 23 (FFAL…AITL), 333 to 353 (EVEQ…FLFL), 360 to 380 (IIPA…MYLC), 387 to 407 (LSLM…IVVL), 431 to 451 (VGFT…PLLL), 463 to 483 (FAVT…TLTP), 528 to 548 (LVGV…ISIP), 853 to 873 (VILI…LYES), 875 to 895 (VHPL…LLAL), 897 to 917 (LFNA…IGIV), 953 to 973 (PIMM…LSGG), and 984 to 1004 (ITIV…TPVV).

This sequence belongs to the resistance-nodulation-cell division (RND) (TC 2.A.6) family. MdtC subfamily. Part of a tripartite efflux system composed of MdtA, MdtB and MdtC. MdtC forms a heteromultimer with MdtB.

Its subcellular location is the cell inner membrane. Functionally, the MdtABC tripartite complex confers resistance against novobiocin and deoxycholate. This chain is Multidrug resistance protein MdtC, found in Escherichia coli (strain ATCC 8739 / DSM 1576 / NBRC 3972 / NCIMB 8545 / WDCM 00012 / Crooks).